We begin with the raw amino-acid sequence, 154 residues long: MPVPLAPYPTPPAPALAPSYNTPPANGSTSGQSQLVCSGCRNLLMYPVGATSVCCAVCNAVTAVPPPGTEMAQLVCGGCHTLLMYIRGATSVQCSCCHTVNLALEANQVAHVNCGNCMMLLMYQYGARSVKCAVCNFVTSVGGSTSTTDSKFNN.

Putative zinc finger stretches follow at residues 34-64 (QLVC…VTAV), 73-103 (QLVC…VNLA), and 111-141 (HVNC…VTSV).

The protein localises to the nucleus. In terms of biological role, positive regulator of reactive oxygen-induced cell death. May be involved in the repression of the copper/zinc superoxide dismutase CSD1 and CSD2 that detoxify accumulating superoxide before the reactive oxygen species (ROS) can trigger a cell death cascade. LSD1 and LOL1 have antagonistic effects on CSD1 and CSD2 accumulation to regulate oxidative stress-induced cell death. The polypeptide is Protein LOL1 (LOL1) (Arabidopsis thaliana (Mouse-ear cress)).